We begin with the raw amino-acid sequence, 164 residues long: MNKIIEKMIYESRWLLFPVYIGLSFGFILLTLKFFHEIIQFLPKIFDMPESDLILIVLSMIDIALVGGLLVMVMFSGYENFILKMSDDCNQKRLNWMGKMDVNSIKNKVASSIVAISSVHLLRIFMEADRTRDNKIMWCVIIHLAFVLSAFGMAYIDKMSKTKS.

3 consecutive transmembrane segments (helical) span residues 15–35, 53–73, and 136–156; these read LLFP…LKFF, LILI…LVMV, and IMWC…MAYI.

This sequence belongs to the UPF0114 family.

Its subcellular location is the cell membrane. The sequence is that of UPF0114 protein BCI_0033 from Baumannia cicadellinicola subsp. Homalodisca coagulata.